Here is a 484-residue protein sequence, read N- to C-terminus: Protein nucleotidyltransferase YdiU (484 aa).

The ATP site is built by Gly87, Gly89, Arg90, Lys110, Asp122, Gly123, Arg173, and Arg180. Asp249 serves as the catalytic Proton acceptor. The Mg(2+) site is built by Asn250 and Asp259. Position 259 (Asp259) interacts with ATP. Residues 463–484 (EQEKYAELPPPSDRPYRTFCGT) form a disordered region.

Belongs to the SELO family. Mg(2+) is required as a cofactor. Requires Mn(2+) as cofactor.

The enzyme catalyses L-seryl-[protein] + ATP = 3-O-(5'-adenylyl)-L-seryl-[protein] + diphosphate. The catalysed reaction is L-threonyl-[protein] + ATP = 3-O-(5'-adenylyl)-L-threonyl-[protein] + diphosphate. It carries out the reaction L-tyrosyl-[protein] + ATP = O-(5'-adenylyl)-L-tyrosyl-[protein] + diphosphate. It catalyses the reaction L-histidyl-[protein] + UTP = N(tele)-(5'-uridylyl)-L-histidyl-[protein] + diphosphate. The enzyme catalyses L-seryl-[protein] + UTP = O-(5'-uridylyl)-L-seryl-[protein] + diphosphate. The catalysed reaction is L-tyrosyl-[protein] + UTP = O-(5'-uridylyl)-L-tyrosyl-[protein] + diphosphate. In terms of biological role, nucleotidyltransferase involved in the post-translational modification of proteins. It can catalyze the addition of adenosine monophosphate (AMP) or uridine monophosphate (UMP) to a protein, resulting in modifications known as AMPylation and UMPylation. This Geobacillus kaustophilus (strain HTA426) protein is Protein nucleotidyltransferase YdiU.